Here is a 361-residue protein sequence, read N- to C-terminus: S-adenosylmethionine:tRNA ribosyltransferase-isomerase (361 aa).

This sequence belongs to the QueA family. As to quaternary structure, monomer.

It is found in the cytoplasm. It catalyses the reaction 7-aminomethyl-7-carbaguanosine(34) in tRNA + S-adenosyl-L-methionine = epoxyqueuosine(34) in tRNA + adenine + L-methionine + 2 H(+). It functions in the pathway tRNA modification; tRNA-queuosine biosynthesis. Its function is as follows. Transfers and isomerizes the ribose moiety from AdoMet to the 7-aminomethyl group of 7-deazaguanine (preQ1-tRNA) to give epoxyqueuosine (oQ-tRNA). This Actinobacillus pleuropneumoniae serotype 7 (strain AP76) protein is S-adenosylmethionine:tRNA ribosyltransferase-isomerase.